A 746-amino-acid polypeptide reads, in one-letter code: Transcription factor pbcR (746 aa).

Residues 1–12 show a composition bias toward polar residues; it reads MYPWSSTGTSPF. A disordered region spans residues 1-40; it reads MYPWSSTGTSPFSHPDNEGAESGDMSMGEEQQQPHQRRQK. Residues 47–76 constitute a DNA-binding region (zn(2)-C6 fungal-type); that stretch reads CQSCRASKVRCDQPNPGMPCLRCQKSGKPC. A disordered region spans residues 109-131; sequence ELQDSAGDGETAHSTALRSPSQL. Polar residues predominate over residues 120–131; the sequence is AHSTALRSPSQL.

It is found in the nucleus. Functionally, transcription factor; part of the gene cluster that mediates the biosynthesis of the diterpene ent-pimara-8(14),15-diene (PD). Acts as a positive regulator for the cluster gene. Down-regulates the expression of the penicillin gene cluster, two putative polyketide clusters, and one putative nonribosomal peptide cluster. In Emericella nidulans (strain FGSC A4 / ATCC 38163 / CBS 112.46 / NRRL 194 / M139) (Aspergillus nidulans), this protein is Transcription factor pbcR.